Reading from the N-terminus, the 122-residue chain is MHPSVVRLVKPRRPERITSPILPPLPLYRAILRAHHRKLPQELRYLGDQYVKKEFKDHKKIDNPLHIVGFLTEWQDYLKQIDGGSWSHGKLSKDDLDKMSPEQIGQLHELMEATKKIGEESI.

The transit peptide at 1–47 (MHPSVVRLVKPRRPERITSPILPPLPLYRAILRAHHRKLPQELRYLG) directs the protein to the mitochondrion.

It belongs to the complex I LYR family. SDHAF3 subfamily. As to quaternary structure, interacts with the iron-sulfur protein subunit within the SDH catalytic dimer.

It localises to the mitochondrion matrix. Functionally, plays an essential role in the assembly of succinate dehydrogenase (SDH), an enzyme complex (also referred to as respiratory complex II) that is a component of both the tricarboxylic acid (TCA) cycle and the mitochondrial electron transport chain, and which couples the oxidation of succinate to fumarate with the reduction of ubiquinone (coenzyme Q) to ubiquinol. Promotes maturation of the iron-sulfur protein subunit of the SDH catalytic dimer, protecting it from the deleterious effects of oxidants. May act together with SDHAF1. The sequence is that of Succinate dehydrogenase assembly factor 3, mitochondrial from Candida albicans (strain SC5314 / ATCC MYA-2876) (Yeast).